Reading from the N-terminus, the 600-residue chain is MDEVKEFTSKQFFYTLLTLPSTLKLIFQLEKRYAIYLIVLNAITAFVPLASLFIYQDLINSVLGSGRHLINIIIIYFIVQVITTVLGQLESYVSGKFDMRLSYSINMRLMRTTSSLELSDYEQADMYNIIEKVTQDSTYKPFQLFNAIIVELSSFISLLSSLFFIGTWNIGVAILLLIVPVLSLVLFLRVGQLEFLIQWQRASSERETWYIVYLLTHDFSFKEIKLNNISNYFIHKFGKLKKGFINQDLAIARKKTYFNIFLDFILNLINILTIFAMILSVRAGKLLIGNLVSLIQAISKINTYSQTMIQNIYIIYNTSLFMEQLFEFLKRESVVHKKIEDTEICNQHIGTVKVINLSYVYPNSNAFALKNINLSFEKGELTAIVGKNGSGKSTLVKIISGLYQPTMGIIQYDKMRSSLMPEEFYQKNISVLFQDFVKYELTIRENIGLSDLSSQWEDEKIIKVLDNLGLDFLKTNNQYVLDTQLGNWFQEGHQLSGGQWQKIALARTFFKKASIYILDEPSAALDPVAEKEIFDYFVALSENNISIFISHSLNAARKANKIVVMKDGQVEDVGSHDVLLRRCQYYQELYYSEQYEDNDE.

5 helical membrane-spanning segments follow: residues 34 to 54 (AIYL…SLFI), 69 to 89 (LINI…LGQL), 147 to 167 (AIIV…FIGT), 168 to 188 (WNIG…VLFL), and 260 to 280 (IFLD…MILS). The ABC transmembrane type-1 domain maps to 34 to 317 (AIYLIVLNAI…MIQNIYIIYN (284 aa)). One can recognise an ABC transporter domain in the interval 352 to 592 (VKVINLSYVY…CQYYQELYYS (241 aa)). 386–393 (GKNGSGKS) lines the ATP pocket.

This sequence belongs to the ABC transporter superfamily. Nisin exporter (TC 3.A.1.111.3) family.

It is found in the cell membrane. In terms of biological role, probably implicated in the export process of the lantibiotic nisin. This Lactococcus lactis subsp. lactis (Streptococcus lactis) protein is Nisin transport ATP-binding protein NisT (nisT).